The primary structure comprises 525 residues: Glucose-6-phosphate isomerase (525 aa).

E356 functions as the Proton donor in the catalytic mechanism. Catalysis depends on residues H387 and K502.

It belongs to the GPI family.

It is found in the cytoplasm. It carries out the reaction alpha-D-glucose 6-phosphate = beta-D-fructose 6-phosphate. It functions in the pathway carbohydrate biosynthesis; gluconeogenesis. It participates in carbohydrate degradation; glycolysis; D-glyceraldehyde 3-phosphate and glycerone phosphate from D-glucose: step 2/4. Catalyzes the reversible isomerization of glucose-6-phosphate to fructose-6-phosphate. The protein is Glucose-6-phosphate isomerase of Treponema denticola (strain ATCC 35405 / DSM 14222 / CIP 103919 / JCM 8153 / KCTC 15104).